The following is an 85-amino-acid chain: Polcalcin Bet v 4 (85 aa).

2 EF-hand domains span residues 7 to 42 (QDKAERERIFKRFDANGDGKISAAELGEALKTLGSI) and 42 to 77 (ITPDEVKHMMAEIDTDGDGFISFQEFTDFGRANRGL). Positions 20, 22, 24, 26, 31, 55, 57, 59, and 66 each coordinate Ca(2+).

In terms of assembly, monomer.

The protein is Polcalcin Bet v 4 (BETV4) of Betula pendula (European white birch).